The chain runs to 246 residues: tRNA (guanine-N(1)-)-methyltransferase (246 aa).

S-adenosyl-L-methionine-binding positions include Gly112 and 131 to 136 (IGDYVL).

The protein belongs to the RNA methyltransferase TrmD family. As to quaternary structure, homodimer.

The protein resides in the cytoplasm. The catalysed reaction is guanosine(37) in tRNA + S-adenosyl-L-methionine = N(1)-methylguanosine(37) in tRNA + S-adenosyl-L-homocysteine + H(+). Specifically methylates guanosine-37 in various tRNAs. The chain is tRNA (guanine-N(1)-)-methyltransferase from Thermosipho melanesiensis (strain DSM 12029 / CIP 104789 / BI429).